Reading from the N-terminus, the 505-residue chain is N-succinylglutamate 5-semialdehyde dehydrogenase (505 aa).

Residue 234-239 (GSAHTG) participates in NAD(+) binding. Active-site residues include Glu257 and Cys291.

This sequence belongs to the aldehyde dehydrogenase family. AstD subfamily.

The catalysed reaction is N-succinyl-L-glutamate 5-semialdehyde + NAD(+) + H2O = N-succinyl-L-glutamate + NADH + 2 H(+). It functions in the pathway amino-acid degradation; L-arginine degradation via AST pathway; L-glutamate and succinate from L-arginine: step 4/5. Catalyzes the NAD-dependent reduction of succinylglutamate semialdehyde into succinylglutamate. The protein is N-succinylglutamate 5-semialdehyde dehydrogenase of Yersinia pestis (strain Pestoides F).